A 37-amino-acid chain; its full sequence is Cytochrome b6-f complex subunit 5 (37 aa).

The helical transmembrane segment at 5–25 threads the bilayer; it reads LLCGIVLGLIPVTLAGLFFAA.

Belongs to the PetG family. In terms of assembly, the 4 large subunits of the cytochrome b6-f complex are cytochrome b6, subunit IV (17 kDa polypeptide, PetD), cytochrome f and the Rieske protein, while the 4 small subunits are PetG, PetL, PetM and PetN. The complex functions as a dimer.

The protein resides in the cellular thylakoid membrane. Functionally, component of the cytochrome b6-f complex, which mediates electron transfer between photosystem II (PSII) and photosystem I (PSI), cyclic electron flow around PSI, and state transitions. PetG is required for either the stability or assembly of the cytochrome b6-f complex. The protein is Cytochrome b6-f complex subunit 5 of Thermosynechococcus vestitus (strain NIES-2133 / IAM M-273 / BP-1).